Here is a 249-residue protein sequence, read N- to C-terminus: Seipin homolog (249 aa).

The Cytoplasmic portion of the chain corresponds to 1-10; that stretch reads MGYLVKLFKL. A helical membrane pass occupies residues 11 to 31; it reads VVWMLVIGLFSIPSLVSYVIF. Over 32–212 the chain is Lumenal; the sequence is YDTVIPHSVI…GMRWFMYTHK (181 aa). The chain crosses the membrane as a helical span at residues 213-233; the sequence is VSAFLVFTSLFWFTGITSTII. The Cytoplasmic segment spans residues 234 to 249; the sequence is TYLIVSSTSETKATRR.

The protein belongs to the seipin family.

It is found in the endoplasmic reticulum membrane. Involved in lipid metabolism and lipid droplet (LD) morphology, number, and size. Facilitates initiation of LD formation, and ensures that vectorial budding of LDs from the ER is directed towards the cytoplasm. The protein is Seipin homolog of Schizosaccharomyces pombe (strain 972 / ATCC 24843) (Fission yeast).